A 223-amino-acid polypeptide reads, in one-letter code: Killer cell lectin-like receptor subfamily B member 1A (223 aa).

Residues 1–43 are Cytoplasmic-facing; sequence MDTARVYLSLKPSKTAAGAQCVSPPSLPPDACRCPRSHRLALK. The LCK-binding motif signature appears at 32-35; the sequence is CRCP. A helical; Signal-anchor for type II membrane protein membrane pass occupies residues 44-63; sequence LSCAGLILLVLALVGMSILV. The Extracellular portion of the chain corresponds to 64 to 223; the sequence is RVLVQKPSVE…LKCECMCNDS (160 aa). Positions 93–212 constitute a C-type lectin domain; sequence KCPKDWLSHR…DSDNIWVCQK (120 aa). 3 cysteine pairs are disulfide-bonded: cysteine 94–cysteine 105, cysteine 122–cysteine 210, and cysteine 189–cysteine 202.

Homodimer; disulfide-linked. Interacts with tyrosine kinase LCK. As to expression, expressed in natural killer cells.

The protein resides in the membrane. Its function is as follows. Plays a stimulatory role on natural killer (NK) cell cytotoxicity. In Rattus norvegicus (Rat), this protein is Killer cell lectin-like receptor subfamily B member 1A (Klrb1a).